Here is a 185-residue protein sequence, read N- to C-terminus: Prenylated Rab acceptor protein 1 (185 aa).

Over 1–78 the chain is Cytoplasmic; sequence MAAQKDQQKD…RNVEYYQSNY (78 aa). Positions 30 to 54 are required for interaction with prenylated RAB3A and VAMP2; the sequence is AGREWLERRRATIRPWGTFVDQQRF. 2 consecutive transmembrane segments (helical) span residues 79-94 and 95-112; these read VFVFLGLILYCVVTSP and MLLVALAVFFGACYILYL. Residues 113–131 lie on the Cytoplasmic side of the membrane; that stretch reads RTLQSKLVLFGREVSPAHQ. 2 consecutive transmembrane segments (helical) span residues 132 to 148 and 149 to 165; these read YALAGGVSFPFFWLAGA and GSAVFWVLGATLVLIGS. Residues 165–185 are required for interaction with GDI1; the sequence is SHAAFHQIEPADGEELQMEPV. The Cytoplasmic portion of the chain corresponds to 166–185; it reads HAAFHQIEPADGEELQMEPV. A required for interaction with prenylated RAB3A and VAMP2 region spans residues 175-185; that stretch reads ADGEELQMEPV. Residues 175 to 185 are homodimerization; that stretch reads ADGEELQMEPV.

This sequence belongs to the PRA1 family. Homodimers. Interacts specifically with both prenylated Rab proteins (including RAB3A and RAB1), and VAMP2 (synaptobrevin-2), in an exclusive way. Interacts with NDRG1. Interacts with free GDI1 in the absence of Rab proteins. Also interacts with PCLO. As to expression, ubiquitous.

It localises to the cell membrane. The protein localises to the cytoplasm. It is found in the golgi apparatus. The protein resides in the cytoplasmic vesicle. Its subcellular location is the secretory vesicle. It localises to the synaptic vesicle. Its function is as follows. General Rab protein regulator required for vesicle formation from the Golgi complex. May control vesicle docking and fusion by mediating the action of Rab GTPases to the SNARE complexes. In addition it inhibits the removal of Rab GTPases from the membrane by GDI1. This Rattus norvegicus (Rat) protein is Prenylated Rab acceptor protein 1 (Rabac1).